The sequence spans 297 residues: Glycerol-3-phosphate dehydrogenase [NAD(P)+] (297 aa).

Residues W11, R33, and K79 each contribute to the NADPH site. Sn-glycerol 3-phosphate contacts are provided by K79, G107, and S109. An NADPH-binding site is contributed by A111. Sn-glycerol 3-phosphate-binding residues include K161, D214, S224, R225, and N226. K161 (proton acceptor) is an active-site residue. R225 provides a ligand contact to NADPH. Residues V249 and E251 each contribute to the NADPH site.

It belongs to the NAD-dependent glycerol-3-phosphate dehydrogenase family.

It localises to the cytoplasm. It catalyses the reaction sn-glycerol 3-phosphate + NAD(+) = dihydroxyacetone phosphate + NADH + H(+). It carries out the reaction sn-glycerol 3-phosphate + NADP(+) = dihydroxyacetone phosphate + NADPH + H(+). It functions in the pathway membrane lipid metabolism; glycerophospholipid metabolism. Catalyzes the reduction of the glycolytic intermediate dihydroxyacetone phosphate (DHAP) to sn-glycerol 3-phosphate (G3P), the key precursor for phospholipid synthesis. The chain is Glycerol-3-phosphate dehydrogenase [NAD(P)+] from Campylobacter jejuni subsp. jejuni serotype O:2 (strain ATCC 700819 / NCTC 11168).